A 165-amino-acid polypeptide reads, in one-letter code: MIIEGPVIKFGDKIDTDIIIPARYLKYTDPQYLAQHAMEPLDPEFYKKASKGVIIVAGKVFGMGSSREQAAIALKAAGVKAVVAESFARIFYRNAINNGLPVITLPNSTKEIDENSYVKIDVETGEILVGNKVLKGKGITGMALEILQAGGIMEYLKKMQTVNRN.

The protein belongs to the LeuD family. LeuD type 2 subfamily. In terms of assembly, heterodimer of LeuC and LeuD.

The enzyme catalyses (2R,3S)-3-isopropylmalate = (2S)-2-isopropylmalate. Its pathway is amino-acid biosynthesis; L-leucine biosynthesis; L-leucine from 3-methyl-2-oxobutanoate: step 2/4. Functionally, catalyzes the isomerization between 2-isopropylmalate and 3-isopropylmalate, via the formation of 2-isopropylmaleate. In Saccharolobus islandicus (strain M.14.25 / Kamchatka #1) (Sulfolobus islandicus), this protein is 3-isopropylmalate dehydratase small subunit.